The chain runs to 232 residues: uncharacterized protein (232 aa).

A disordered region spans residues 119–145; the sequence is DEEYRENSKAPEAKARPSFVGEGRRLG. The segment covering 123–133 has biased composition (basic and acidic residues); that stretch reads RENSKAPEAKA.

This is an uncharacterized protein from Encephalitozoon cuniculi (strain GB-M1) (Microsporidian parasite).